The chain runs to 100 residues: Urease subunit gamma (100 aa).

Belongs to the urease gamma subunit family. As to quaternary structure, heterotrimer of UreA (gamma), UreB (beta) and UreC (alpha) subunits. Three heterotrimers associate to form the active enzyme.

The protein localises to the cytoplasm. The catalysed reaction is urea + 2 H2O + H(+) = hydrogencarbonate + 2 NH4(+). It functions in the pathway nitrogen metabolism; urea degradation; CO(2) and NH(3) from urea (urease route): step 1/1. The polypeptide is Urease subunit gamma (Corynebacterium glutamicum (strain R)).